The primary structure comprises 1005 residues: Beta-galactosidase (1005 aa).

E455 acts as the Proton donor in catalysis. E526 acts as the Nucleophile in catalysis.

It belongs to the glycosyl hydrolase 2 family.

The catalysed reaction is Hydrolysis of terminal non-reducing beta-D-galactose residues in beta-D-galactosides.. The protein is Beta-galactosidase (lacZ) of Actinobacillus pleuropneumoniae (Haemophilus pleuropneumoniae).